Consider the following 249-residue polypeptide: Phosphate import ATP-binding protein PstB (249 aa).

One can recognise an ABC transporter domain in the interval 4–244; sequence VKIKDLSLFY…PQDKRTEDYI (241 aa). 36–43 serves as a coordination point for ATP; that stretch reads GPSGCGKS.

Belongs to the ABC transporter superfamily. Phosphate importer (TC 3.A.1.7) family. In terms of assembly, the complex is composed of two ATP-binding proteins (PstB), two transmembrane proteins (PstC and PstA) and a solute-binding protein (PstS).

It is found in the cell membrane. The enzyme catalyses phosphate(out) + ATP + H2O = ADP + 2 phosphate(in) + H(+). Its function is as follows. Part of the ABC transporter complex PstSACB involved in phosphate import. Responsible for energy coupling to the transport system. This chain is Phosphate import ATP-binding protein PstB, found in Clostridium tetani (strain Massachusetts / E88).